The following is a 156-amino-acid chain: Perlucin-like protein (156 aa).

The signal sequence occupies residues 1–22; the sequence is MGKLTVVGILTLFIFYIVAASG. Intrachain disulfides connect Cys-30–Cys-41, Cys-58–Cys-156, and Cys-131–Cys-147. The region spanning 37-156 is the C-type lectin domain; sequence YKTNCYFFSP…CNTDQMGYIC (120 aa).

As to expression, component of the organic matrix of calcified shell layers like nacre and prisms.

Its subcellular location is the secreted. This is Perlucin-like protein from Mytilus galloprovincialis (Mediterranean mussel).